We begin with the raw amino-acid sequence, 169 residues long: Der GTPase-activating protein YihI (169 aa).

Disordered regions lie at residues 1–100 and 144–169; these read MKPS…AELE and GLSY…LRGN. Basic residues predominate over residues 10–19; that stretch reads SKGHAKARRK. The segment covering 20–30 has biased composition (basic and acidic residues); that stretch reads TREELDQEARD. Basic residues predominate over residues 31–40; that stretch reads RKRQKKRRGH. Residues 49–58 show a composition bias toward polar residues; the sequence is GNTTSGSKGQ. Positions 147-159 are enriched in acidic residues; sequence YDDDEEEEEDEKQ. Residues 160–169 show a composition bias toward basic and acidic residues; it reads EDMMRLLRGN.

Belongs to the YihI family. In terms of assembly, interacts with Der.

Functionally, a GTPase-activating protein (GAP) that modifies Der/EngA GTPase function. May play a role in ribosome biogenesis. This Escherichia coli O6:H1 (strain CFT073 / ATCC 700928 / UPEC) protein is Der GTPase-activating protein YihI.